Here is a 463-residue protein sequence, read N- to C-terminus: MPAAPRAASASPAAVAPGSDPVVSIDSLDMEARGVGRLVNEDGTPGKVIFVEGALPGETVSYKSFRRKPSYEQAHLLEVRRESVMRVKPGCKHFGVCGGCSMQHLDSRAQLAIKQRVLEDNLWHLSKVRPEVMFRPIAGPDWGYRYRARLTVRYVAKKGGVLVGFHERKSSYVADMTSCEILPPHISAMLVPLRELVTGLSIRDRMPQIELAVGHEVTALVLRILEPLTDADKDLLRAFADQHNVQFWLQPKGPDTVVPFYPLDRELAYTLPEFGIRMPFKPTDFTQVNHHINRVLIGRALRLLDVQPQDRLLDLFCGIGNFTLPLATQGRSVMGIEGSEALTTRALANAGYNGLAEKTEFACRNLFEVTAEDIAALGRFDRWLIDPPREGALAVCKALGELSQQGSDVLPQRIVYVSCSPATLARDAGLLVHEAGYRLAGAGVVNMFPHTSHVESIAVFERR.

In terms of domain architecture, TRAM spans 14–78 (AVAPGSDPVV…PSYEQAHLLE (65 aa)). [4Fe-4S] cluster-binding residues include Cys-91, Cys-97, Cys-100, and Cys-179. S-adenosyl-L-methionine-binding residues include Gln-287, Phe-316, Asn-321, Glu-337, Asn-365, and Asp-386. Cys-419 (nucleophile) is an active-site residue.

The protein belongs to the class I-like SAM-binding methyltransferase superfamily. RNA M5U methyltransferase family. RlmD subfamily.

The catalysed reaction is uridine(1939) in 23S rRNA + S-adenosyl-L-methionine = 5-methyluridine(1939) in 23S rRNA + S-adenosyl-L-homocysteine + H(+). Catalyzes the formation of 5-methyl-uridine at position 1939 (m5U1939) in 23S rRNA. This chain is 23S rRNA (uracil(1939)-C(5))-methyltransferase RlmD, found in Cupriavidus pinatubonensis (strain JMP 134 / LMG 1197) (Cupriavidus necator (strain JMP 134)).